The sequence spans 89 residues: Small ribosomal subunit protein uS15 (89 aa).

Belongs to the universal ribosomal protein uS15 family. Part of the 30S ribosomal subunit. Forms a bridge to the 50S subunit in the 70S ribosome, contacting the 23S rRNA.

Functionally, one of the primary rRNA binding proteins, it binds directly to 16S rRNA where it helps nucleate assembly of the platform of the 30S subunit by binding and bridging several RNA helices of the 16S rRNA. Its function is as follows. Forms an intersubunit bridge (bridge B4) with the 23S rRNA of the 50S subunit in the ribosome. In Lactiplantibacillus plantarum (strain ATCC BAA-793 / NCIMB 8826 / WCFS1) (Lactobacillus plantarum), this protein is Small ribosomal subunit protein uS15.